The sequence spans 601 residues: DNA ligase (601 aa).

Residue Asp-258 coordinates ATP. Lys-260 acts as the N6-AMP-lysine intermediate in catalysis. Residues Arg-265, Arg-280, Glu-310, Phe-350, Arg-427, and Lys-433 each contribute to the ATP site.

This sequence belongs to the ATP-dependent DNA ligase family. Interacts with the PCNA heterotrimer, probably via subunit PCNA3. A divalent metal cation is required as a cofactor.

The catalysed reaction is ATP + (deoxyribonucleotide)n-3'-hydroxyl + 5'-phospho-(deoxyribonucleotide)m = (deoxyribonucleotide)n+m + AMP + diphosphate.. Ligase activity stimulated by PCNA heterotrimer. DNA ligase that seals nicks in double-stranded DNA during DNA replication, DNA recombination and DNA repair. Interaction with PCNA enhances ligase activity. DNA polymerase I, DNA ligase and the flap endonuclease may be constitutively associated with the PCNA heterotrimer forming a scanning complex able to couple DNA synthesis and Okazaki fragment maturation. In Saccharolobus solfataricus (strain ATCC 35092 / DSM 1617 / JCM 11322 / P2) (Sulfolobus solfataricus), this protein is DNA ligase.